A 433-amino-acid polypeptide reads, in one-letter code: Succinate--CoA ligase [GDP-forming] subunit beta, mitochondrial (433 aa).

The transit peptide at 1–38 (IPAAPVAAQARKLLRDLAFRPPLLAARSQVVQLTPRRW) directs the protein to the mitochondrion. The 229-residue stretch at 47-275 (KKLMSDNGVK…NAEFRQKDIF (229 aa)) folds into the ATP-grasp domain. A GTP-binding site is contributed by glutamine 58. Lysine 74 is modified (N6-acetyllysine). Residue lysine 79 is modified to N6-succinyllysine. 91–93 (GRG) serves as a coordination point for GTP. 2 positions are modified to N6-acetyllysine: lysine 133 and lysine 140. Leucine 147 contacts GTP. Residue serine 162 is modified to Phosphoserine. N6-acetyllysine is present on residues lysine 201 and lysine 228. Asparagine 244 and aspartate 258 together coordinate Mg(2+). N6-acetyllysine is present on residues lysine 272 and lysine 292. Substrate is bound at residue asparagine 309. Lysine 339 carries the N6-succinyllysine modification. An N6-acetyllysine modification is found at lysine 348. 366 to 368 (GIV) lines the substrate pocket. 2 positions are modified to N6-acetyllysine: lysine 387 and lysine 424.

Belongs to the succinate/malate CoA ligase beta subunit family. GTP-specific subunit beta subfamily. As to quaternary structure, heterodimer of an alpha and a beta subunit. The beta subunit determines specificity for GTP. Mg(2+) serves as cofactor.

The protein resides in the mitochondrion. It carries out the reaction GTP + succinate + CoA = succinyl-CoA + GDP + phosphate. Its pathway is carbohydrate metabolism; tricarboxylic acid cycle; succinate from succinyl-CoA (ligase route): step 1/1. In terms of biological role, GTP-specific succinyl-CoA synthetase functions in the citric acid cycle (TCA), coupling the hydrolysis of succinyl-CoA to the synthesis of GTP and thus represents the only step of substrate-level phosphorylation in the TCA. The beta subunit provides nucleotide specificity of the enzyme and binds the substrate succinate, while the binding sites for coenzyme A and phosphate are found in the alpha subunit. The sequence is that of Succinate--CoA ligase [GDP-forming] subunit beta, mitochondrial from Sus scrofa (Pig).